A 27-amino-acid polypeptide reads, in one-letter code: Cupiennin-3c (27 aa).

In terms of tissue distribution, expressed by the venom gland.

It is found in the secreted. In Cupiennius salei (American wandering spider), this protein is Cupiennin-3c.